The chain runs to 402 residues: 4-hydroxy-3-methylbut-2-enyl diphosphate reductase (402 aa).

[4Fe-4S] cluster is bound at residue C66. A (2E)-4-hydroxy-3-methylbut-2-enyl diphosphate-binding site is contributed by H96. A dimethylallyl diphosphate-binding site is contributed by H96. Residue H96 participates in isopentenyl diphosphate binding. C157 contributes to the [4Fe-4S] cluster binding site. H185 contributes to the (2E)-4-hydroxy-3-methylbut-2-enyl diphosphate binding site. H185 serves as a coordination point for dimethylallyl diphosphate. H185 lines the isopentenyl diphosphate pocket. The Proton donor role is filled by E187. T250 lines the (2E)-4-hydroxy-3-methylbut-2-enyl diphosphate pocket. [4Fe-4S] cluster is bound at residue C288. Residues S317, S318, N319, and S379 each contribute to the (2E)-4-hydroxy-3-methylbut-2-enyl diphosphate site. Dimethylallyl diphosphate is bound by residues S317, S318, N319, and S379. Residues S317, S318, N319, and S379 each coordinate isopentenyl diphosphate.

Belongs to the IspH family. [4Fe-4S] cluster is required as a cofactor.

The enzyme catalyses isopentenyl diphosphate + 2 oxidized [2Fe-2S]-[ferredoxin] + H2O = (2E)-4-hydroxy-3-methylbut-2-enyl diphosphate + 2 reduced [2Fe-2S]-[ferredoxin] + 2 H(+). It carries out the reaction dimethylallyl diphosphate + 2 oxidized [2Fe-2S]-[ferredoxin] + H2O = (2E)-4-hydroxy-3-methylbut-2-enyl diphosphate + 2 reduced [2Fe-2S]-[ferredoxin] + 2 H(+). It participates in isoprenoid biosynthesis; dimethylallyl diphosphate biosynthesis; dimethylallyl diphosphate from (2E)-4-hydroxy-3-methylbutenyl diphosphate: step 1/1. Its pathway is isoprenoid biosynthesis; isopentenyl diphosphate biosynthesis via DXP pathway; isopentenyl diphosphate from 1-deoxy-D-xylulose 5-phosphate: step 6/6. Its function is as follows. Catalyzes the conversion of 1-hydroxy-2-methyl-2-(E)-butenyl 4-diphosphate (HMBPP) into a mixture of isopentenyl diphosphate (IPP) and dimethylallyl diphosphate (DMAPP). Acts in the terminal step of the DOXP/MEP pathway for isoprenoid precursor biosynthesis. This chain is 4-hydroxy-3-methylbut-2-enyl diphosphate reductase, found in Nostoc punctiforme (strain ATCC 29133 / PCC 73102).